Reading from the N-terminus, the 117-residue chain is Protein Wnt-6 (117 aa).

Ser-1 carries O-palmitoleoyl serine; by PORCN lipidation. Cys-83 and Cys-98 are disulfide-bonded. Residue Asn-84 is glycosylated (N-linked (GlcNAc...) asparagine).

Belongs to the Wnt family. Palmitoleoylation is required for efficient binding to frizzled receptors. Depalmitoleoylation leads to Wnt signaling pathway inhibition.

Its subcellular location is the secreted. The protein resides in the extracellular space. It localises to the extracellular matrix. Its function is as follows. Ligand for members of the frizzled family of seven transmembrane receptors. Probable developmental protein. May be a signaling molecule which affects the development of discrete regions of tissues. Is likely to signal over only few cell diameters. The sequence is that of Protein Wnt-6 (WNT-6) from Evasterias troschelii (Mottled sea star).